The chain runs to 678 residues: Beta-catenin-like protein hmp-2 (678 aa).

ARM repeat units follow at residues 153–192, 280–319, 320–359, 362–403, and 409–448; these read RGGP…NLLM, PSNK…RNLS, DSAT…NLTC, TRNK…HCTA, and EEAQ…NSAL.

Belongs to the beta-catenin family. In terms of assembly, component of a core catenin-cadherin complex consisting of hmr-1, hmp-1 and hmp-2; the complex localizes to adherens junctions. Interacts with hmr-1; the interaction is direct. May interact with hmp-1. Interacts with frk-1. As to expression, epidermal cells.

The protein resides in the cell junction. It localises to the adherens junction. In terms of biological role, required for cell migration during body enclosure and cell shape changes during body elongation. Plays a role in recruitment of the cadherin protein hmr-1 to adherens junctions. The polypeptide is Beta-catenin-like protein hmp-2 (hmp-2) (Caenorhabditis elegans).